A 341-amino-acid polypeptide reads, in one-letter code: Phenylalanine--tRNA ligase alpha subunit (341 aa).

E254 serves as a coordination point for Mg(2+).

It belongs to the class-II aminoacyl-tRNA synthetase family. Phe-tRNA synthetase alpha subunit type 1 subfamily. As to quaternary structure, tetramer of two alpha and two beta subunits. Mg(2+) is required as a cofactor.

The protein resides in the cytoplasm. It carries out the reaction tRNA(Phe) + L-phenylalanine + ATP = L-phenylalanyl-tRNA(Phe) + AMP + diphosphate + H(+). This Chlorobium phaeobacteroides (strain DSM 266 / SMG 266 / 2430) protein is Phenylalanine--tRNA ligase alpha subunit.